Consider the following 714-residue polypeptide: Calpain-1 catalytic subunit (714 aa).

Residues 55-354 (LFRDEAFPPV…FTRLEICNLT (300 aa)) enclose the Calpain catalytic domain. 2 residues coordinate Ca(2+): Gln109 and Asp114. Residues Cys115, His272, and Asn296 contribute to the active site. 3 residues coordinate Ca(2+): Ser316, Asp318, and Glu323. Thr354 is subject to Phosphothreonine. Residues 355–526 (PDALKSRTIR…KSAGTAELDD (172 aa)) are domain III. Positions 527 to 542 (QIQANLPDEQVLSEEE) are linker. EF-hand domains are found at residues 541–576 (EEID…IISK), 585–618 (FSLE…NRIR), 615–650 (NRIR…AGFK), and 680–714 (VRLE…TMFA). The interval 543–713 (IDENFKALFR…LFKWLQLTMF (171 aa)) is domain IV. Ca(2+) is bound by residues Asp598, Asp600, Asn602, Lys604, Glu609, Asp628, Asp630, Ser632, Ser634, and Glu639.

It belongs to the peptidase C2 family. Forms a heterodimer with a small (regulatory) subunit (CAPNS1). Ca(2+) is required as a cofactor. Post-translationally, undergoes calcium-induced successive autoproteolytic cleavages that generate a membrane-bound 78 kDa active form and an intracellular 75 kDa active form. Calpastatin reduces with high efficiency the transition from 78 kDa to 75 kDa calpain forms. As to expression, ubiquitous.

It is found in the cytoplasm. The protein localises to the cell membrane. It catalyses the reaction Broad endopeptidase specificity.. Activated by micromolar concentrations of calcium and inhibited by calpastatin. Functionally, calcium-regulated non-lysosomal thiol-protease which catalyze limited proteolysis of substrates involved in cytoskeletal remodeling and signal transduction. Proteolytically cleaves CTBP1. Cleaves and activates caspase-7 (CASP7). The protein is Calpain-1 catalytic subunit (CAPN1) of Macaca fascicularis (Crab-eating macaque).